A 198-amino-acid polypeptide reads, in one-letter code: Protein GrpE (198 aa).

Belongs to the GrpE family. In terms of assembly, homodimer.

Its subcellular location is the cytoplasm. Functionally, participates actively in the response to hyperosmotic and heat shock by preventing the aggregation of stress-denatured proteins, in association with DnaK and GrpE. It is the nucleotide exchange factor for DnaK and may function as a thermosensor. Unfolded proteins bind initially to DnaJ; upon interaction with the DnaJ-bound protein, DnaK hydrolyzes its bound ATP, resulting in the formation of a stable complex. GrpE releases ADP from DnaK; ATP binding to DnaK triggers the release of the substrate protein, thus completing the reaction cycle. Several rounds of ATP-dependent interactions between DnaJ, DnaK and GrpE are required for fully efficient folding. The protein is Protein GrpE of Actinobacillus pleuropneumoniae serotype 5b (strain L20).